Here is a 270-residue protein sequence, read N- to C-terminus: MKTKTAFMAILFSLITVLSACGAGSQTTGAGQKKVQTITVGTGTQFPNICFIDEKGDLTGYDVELIKELDKRLPHYKFTFKTMEFSNLLVSLGQHKVDIVAHQMEKSKEREKKFLFNKVAYNHFPLKITVLQNNDTIRGIEDLKGKRVITSATSNGALVLKKWNEDNGRPFEIAYEGQGANETANQLKSGRADATISTPFAVDFQNKTSTIKEKTVGNVLSNAKVYFMFNKNEQTLSDDIDKALQEIIDDGTLKRLSLKWLGDDYSKEQY.

Positions 1–20 (MKTKTAFMAILFSLITVLSA) are cleaved as a signal peptide. The N-palmitoyl cysteine moiety is linked to residue Cys21. Cys21 carries the S-diacylglycerol cysteine lipid modification.

Belongs to the bacterial solute-binding protein 3 family. As to quaternary structure, the complex is composed of two ATP-binding proteins (TcyN), two transmembrane proteins (TcyL and TcyM) and two solute-binding proteins (TcyJ and TcyK).

The protein localises to the cell membrane. Its function is as follows. Part of the ABC transporter complex TcyJKLMN involved in L-cystine import. Is also involved in cystathionine, djenkolate, and S-methylcysteine transport. The chain is L-cystine-binding protein TcyK (tcyK) from Bacillus subtilis (strain 168).